The following is a 227-amino-acid chain: Phosphatidylserine decarboxylase proenzyme (227 aa).

The active-site Schiff-base intermediate with substrate; via pyruvic acid is the S169. S169 carries the pyruvic acid (Ser); by autocatalysis modification. The disordered stretch occupies residues 197–227 (GRIPTPESGRSSSAEATAAPSASSARRSSAS). Low complexity predominate over residues 206-227 (RSSSAEATAAPSASSARRSSAS).

This sequence belongs to the phosphatidylserine decarboxylase family. PSD-A subfamily. As to quaternary structure, heterodimer of a large membrane-associated beta subunit and a small pyruvoyl-containing alpha subunit. Pyruvate serves as cofactor. Is synthesized initially as an inactive proenzyme. Formation of the active enzyme involves a self-maturation process in which the active site pyruvoyl group is generated from an internal serine residue via an autocatalytic post-translational modification. Two non-identical subunits are generated from the proenzyme in this reaction, and the pyruvate is formed at the N-terminus of the alpha chain, which is derived from the carboxyl end of the proenzyme. The post-translation cleavage follows an unusual pathway, termed non-hydrolytic serinolysis, in which the side chain hydroxyl group of the serine supplies its oxygen atom to form the C-terminus of the beta chain, while the remainder of the serine residue undergoes an oxidative deamination to produce ammonia and the pyruvoyl prosthetic group on the alpha chain.

The protein resides in the cell membrane. The enzyme catalyses a 1,2-diacyl-sn-glycero-3-phospho-L-serine + H(+) = a 1,2-diacyl-sn-glycero-3-phosphoethanolamine + CO2. It functions in the pathway phospholipid metabolism; phosphatidylethanolamine biosynthesis; phosphatidylethanolamine from CDP-diacylglycerol: step 2/2. In terms of biological role, catalyzes the formation of phosphatidylethanolamine (PtdEtn) from phosphatidylserine (PtdSer). The protein is Phosphatidylserine decarboxylase proenzyme of Salinibacter ruber (strain DSM 13855 / M31).